The chain runs to 689 residues: MSENTFLVEIGTEELPPKALRSLAESFAANVTAELDNAGLAHGKVEWFAAPRRLALKVANLAAAQADREVEKRGPAIAQAFDAEGKPSKAAEGWARGCGITVDQAERLTTDKGEWLLYRAHVKGESTEALLPNMIASSLAKLPIPKLMRWGASDVHFVRPVHTVTLLLGDKVIPATILGIPSDRVIRGHRFMGEPEFTIDHADQYPQILLERGKVIADYEQRKAKIKADAEEAARKIGGQADLSESLLEEVTSLVEWPVVLTAKFEEKFLGVPSEALVYTMKGDQKYFPVYDNAGKLLPNFIFVANIESKDPQQIISGNEKVVRPRLADAEFFFNTDRKKRLEDNLPRLETVLFQQQLGTLRDKTDRIQALAGWIAGQIGADVNHATRAGLLSKCDLMTNMVFEFTDTQGVMGMHYARHDGEAEDVAVALNEQYQPRFAGDALPSNPVACAVAIADKMDTLAGIFGIGQHPKGDKDPFALRRAALGVLRIIVEKNLNLDLQTLTEEAVRLYGEKLTNANVVDDVIDFMLGRFRAWYQDEGYGVDTIQAVLARRPTRPADFDARMKAVSHFRTLEESSALAAANKRVSNILAKSDETLNDIVHASVLKEAAEIKLAGNLVVLRDKLQPYFAAGRYQDALIELAALREPVDEFFENVMVNAEDKDVRINRLTLLSKLRELFLQVADISLLQ.

Belongs to the class-II aminoacyl-tRNA synthetase family. Tetramer of two alpha and two beta subunits.

Its subcellular location is the cytoplasm. It carries out the reaction tRNA(Gly) + glycine + ATP = glycyl-tRNA(Gly) + AMP + diphosphate. This Klebsiella pneumoniae (strain 342) protein is Glycine--tRNA ligase beta subunit.